Here is a 782-residue protein sequence, read N- to C-terminus: LPS-assembly protein LptD (782 aa).

Residues 1–23 (MNKKHTLISLAILTALYSQQSLA) form the signal peptide.

Belongs to the LptD family. As to quaternary structure, component of the lipopolysaccharide transport and assembly complex. Interacts with LptE and LptA.

The protein resides in the cell outer membrane. Functionally, together with LptE, is involved in the assembly of lipopolysaccharide (LPS) at the surface of the outer membrane. The protein is LPS-assembly protein LptD of Haemophilus influenzae (strain 86-028NP).